A 65-amino-acid polypeptide reads, in one-letter code: Hirudin-3A (65 aa).

The interval 1–3 (VVY) is interaction with thrombin active site. 3 cysteine pairs are disulfide-bonded: Cys-6/Cys-14, Cys-16/Cys-28, and Cys-22/Cys-39. The segment at 39–65 (CVTGEGTPKPQSHNDGDFEEIPEEYLQ) is disordered. Residue Thr-45 is glycosylated (O-linked (GalNAc...) threonine). The interaction with fibrinogen-binding exosite of thrombin stretch occupies residues 55 to 65 (DFEEIPEEYLQ). Residues 55–65 (DFEEIPEEYLQ) are compositionally biased toward acidic residues. Position 63 is a sulfotyrosine (Tyr-63).

Belongs to the protease inhibitor I14 (hirudin) family.

It is found in the secreted. In terms of biological role, hirudin is a potent thrombin-specific protease inhibitor. It forms a stable non-covalent complex with alpha-thrombin, thereby abolishing its ability to cleave fibrinogen. The polypeptide is Hirudin-3A (Hirudo medicinalis (Medicinal leech)).